The primary structure comprises 2282 residues: Serine/threonine-protein kinase TEL1 (2282 aa).

Positions 1325–1844 (EIVNSALTLH…LYQISSLMRT (520 aa)) constitute an FAT domain. The region spanning 1939-2250 (VLAQVIKAGG…LSGVKGKLAV (312 aa)) is the PI3K/PI4K catalytic domain. Positions 1945-1951 (KAGGISH) are G-loop. The tract at residues 2115-2123 (GIGDRHCNN) is catalytic loop. The segment at 2135–2159 (HIDLGISFDQGKNLTVPEKVPFRLT) is activation loop. The 33-residue stretch at 2250-2282 (VRLSTEAVVRELIGEAVSVENLAVIFHGWTPFY) folds into the FATC domain.

The protein belongs to the PI3/PI4-kinase family. ATM subfamily. As to quaternary structure, associates with DNA double-strand breaks.

Its subcellular location is the nucleus. It is found in the chromosome. It localises to the telomere. The catalysed reaction is L-seryl-[protein] + ATP = O-phospho-L-seryl-[protein] + ADP + H(+). It carries out the reaction L-threonyl-[protein] + ATP = O-phospho-L-threonyl-[protein] + ADP + H(+). Serine/threonine protein kinase which activates checkpoint signaling upon genotoxic stresses such as ionizing radiation (IR), ultraviolet light (UV), or DNA replication stalling, thereby acting as a DNA damage sensor. Recognizes the substrate consensus sequence [ST]-Q. Phosphorylates histone H2A to form H2AS128ph (gamma-H2A) at sites of DNA damage, involved in the regulation of DNA damage response mechanism. Required for the control of telomere length and genome stability. The sequence is that of Serine/threonine-protein kinase TEL1 (TEL1) from Yarrowia lipolytica (strain CLIB 122 / E 150) (Yeast).